The following is a 364-amino-acid chain: Putative agmatine deiminase 1 (364 aa).

Catalysis depends on Cys-356, which acts as the Amidino-cysteine intermediate.

It belongs to the agmatine deiminase family.

The catalysed reaction is agmatine + H2O = N-carbamoylputrescine + NH4(+). In Listeria monocytogenes serotype 4b (strain F2365), this protein is Putative agmatine deiminase 1.